The sequence spans 447 residues: Citrate synthase-like protein oryE (447 aa).

Active-site residues include H331 and D387.

Belongs to the citrate synthase family.

It functions in the pathway secondary metabolite biosynthesis. Citrate synthase-like protein; part of the gene cluster that mediates the biosynthesis of oryzines, natural products with an unusual maleidride backbone. The two subunits of the fungal fatty acid synthase oryfasA and oryfasB probably form octenoic acid. This fatty acid is most likely activated by the acyl-CoA ligase oryP to give octenyl-CoA before the citrate synthase-like protein oryE catalyzes condensation with oxaloacetate to form tricarboxylic acid. The next steps of the pathways are conjectural, but a favorite possible route has been proposed, beginning with decarboxylation and concomitant dehydration by the decarboxylase oryM, followed by tautomerization, which may lead to the production of a diene intermediate. Reduction of this diene intermediate could give the known metabolite piliformic acid. On the pathway to oryzine B and oryzine A, however, hydroxylation of the diene by the alpha-ketoglutarate-dependent dioxygenase oryG and lactonisation by the lactonohydrolases oryH or oryL could give oryzine B directly. Finally, enoyl reduction by the dehydrogenase oryD would then convert oryzine B into oryzine A. The chain is Citrate synthase-like protein oryE from Aspergillus oryzae (strain ATCC 42149 / RIB 40) (Yellow koji mold).